The chain runs to 239 residues: MNEESTRYVDVNYSDLDKELTYTTSEVAEILNENESTIRYWCDCFSDYIHIEREGRNRKFTKSNIDDLAFTKELLKKERLTIKQAQKRWEHIKTQPSQNTKVISTTETTSQENVLNEQALLKLEEIKKQFLNDISTQINNTISQQLSTALNAHNEALEQTKVELKDYISATIEDKLEANISNLKAHIDATTENTNKQIHQIYDKDVELVNDLKKHMEERKQQNEEQNNKKGFFGKLFKR.

The segment at I138 to R239 is required to bind TubZ. The stretch at L150–K229 forms a coiled coil. Basic and acidic residues predominate over residues E217–N228. The interval E217–R239 is disordered. Residues K229–R239 show a composition bias toward low complexity.

In terms of assembly, forms homooctamers in the absence of the last 13 residues; the coiled coil domain is required for oligomerization. In the presence of GTP and Mg(2+) binds to TubZ and also to TubZ-TubR-tubC DNA; the latter is reshaped from large filament bundles to rings of 30-40 nm diameter.

It localises to the host cytoplasm. Its function is as follows. A probable TubZ filament regulator that is part of the type III partition system presumably used to ensure correct segregation of this bacteriophage. Binds to TubZ in the presence of GTP and Mg(2+), and to TubZ-TubR-tubC (tubC is the centromere-like site). The latter complex is reshaped from large bundles to rings by TubY. Modifies TubZ filaments formed in the presence of GDP to make them thinner and more flexible; in GDP and lacking the last 8 residues of TubZ makes rings without TubT-tubC. This Clostridium botulinum C (Clostridium botulinum C bacteriophage) protein is Regulator protein TubY.